We begin with the raw amino-acid sequence, 387 residues long: Methyltransferase phomM (387 aa).

The methyltransferase domain stretch occupies residues proline 98 to leucine 223.

Belongs to the class I-like SAM-binding methyltransferase superfamily. Erg6/SMT family.

It functions in the pathway mycotoxin biosynthesis. Its function is as follows. Methyltransferase; part of the gene cluster that mediates the biosynthesis of the phomopsins, a group of hexapeptide mycotoxins which infects lupins and causes lupinosis disease in livestock. Within the pathway, phomM acts as an S-adenosylmethionine-dependent alpha-N-methyltransferase that catalyzes two successive N-methylation reactions, converting N-desmethyl-phomopsin A to phomopsin A and phomopsin A further to an N,N-dimethylated congener called phomopsin E. The pathway starts with the processing of the precursor phomA by several endopeptidases including kexin proteases as well as the cluster-specific S41 family peptidase phomP1 and the oligopeptidase phomG to produce 10 identical copies of the hexapeptide Tyr-Val-Ile-Pro-Ile-Asp. After being excised from the precursor peptide, the core peptides are cyclized and modified post-translationally by enzymes encoded within the gene cluster. The timing and order of proteolysis of the phomA precursor and PTMs are still unknown. Two tyrosinase-like enzymes, phomQ1 and phomQ2, catalyze the chlorination and hydroxylation of Tyr, respectively. PhomYb, is proposed to be involved in the construction of the macrocyclic structure. The other 4 ustYa family proteins may be involved in PTMs that generate the unique structure of phomopsin A. PhomYa is required for the hydroxylation of C-beta of Tyr. PhomYc, phomYd, and phomYe are responsible for the biosynthesis of 2,3-dehydroisoleucine (dIle), 2,3-dehydroaspartic acid (dAsp), and 3,4-dehydroproline (dPro), respectively. While dIle formation by phomYc is indispensable for the installation of dAsp by phomYd, the order of the other PTMs have not been elucidated yet. Most of the biosynthetic enzymes likely have broad substrate specificity, and thus, there might be a metabolic grid from a precursor to phomopsin A. The enzyme(s) responsible for the biosynthesis of 3,4-dehydrovaline (dVal) have also not been identified yet. Finally, phomM acts as an S-adenosylmethionine-dependent alpha-N-methyltransferase that catalyzes two successive N-methylation reactions, converting N-desmethyl-phomopsin A to phomopsin A and phomopsin A further to an N,N-dimethylated congener called phomopsin E. The chain is Methyltransferase phomM from Diaporthe leptostromiformis (Lupinosis disease fungus).